Reading from the N-terminus, the 250-residue chain is MAMSKIMSLTGLLASASLVAGHGYVSGVVVDGQYYGGYLVDKYAYSDNPPETIGWSTTATDLGFVDGTGYQSPDIICHKDGKPGALSAEVAAGGEIELQWTEWPESHHGPVLNYLAPCGGDCSAVDKTSLEFFKIEAKGLIDGSSPPGHWATDDLISNNNSWTVTIPASVQEGNYVLRHEIIGLHSAGQKDGAQNYPQCINIKVTGGGAATPAGTAGEALYKDTDPGILFDIYSDLSGGYPIPGPEVFSA.

The first 21 residues, 1-21 (MAMSKIMSLTGLLASASLVAG), serve as a signal peptide directing secretion. 2 residues coordinate Cu(2+): histidine 22 and histidine 107. Intrachain disulfides connect cysteine 77-cysteine 199 and cysteine 118-cysteine 122. Asparagine 159 carries N-linked (GlcNAc...) asparagine glycosylation. O2 is bound by residues histidine 185 and glutamine 194. Tyrosine 196 contributes to the Cu(2+) binding site.

This sequence belongs to the polysaccharide monooxygenase AA9 family. Cu(2+) serves as cofactor.

It localises to the secreted. It catalyses the reaction [(1-&gt;4)-beta-D-glucosyl]n+m + reduced acceptor + O2 = 4-dehydro-beta-D-glucosyl-[(1-&gt;4)-beta-D-glucosyl]n-1 + [(1-&gt;4)-beta-D-glucosyl]m + acceptor + H2O.. In terms of biological role, lytic polysaccharide monooxygenase (LPMO) that depolymerizes crystalline and amorphous polysaccharides via the oxidation of scissile alpha- or beta-(1-4)-glycosidic bonds, yielding C1 or C4 oxidation products. Catalysis by LPMOs requires the reduction of the active-site copper from Cu(II) to Cu(I) by a reducing agent and H(2)O(2) or O(2) as a cosubstrate. In Aspergillus tamarii, this protein is AA9 family lytic polysaccharide monooxygenase E.